Here is a 477-residue protein sequence, read N- to C-terminus: Glycogen synthase (477 aa).

An ADP-alpha-D-glucose-binding site is contributed by Lys-15.

It belongs to the glycosyltransferase 1 family. Bacterial/plant glycogen synthase subfamily.

It carries out the reaction [(1-&gt;4)-alpha-D-glucosyl](n) + ADP-alpha-D-glucose = [(1-&gt;4)-alpha-D-glucosyl](n+1) + ADP + H(+). The protein operates within glycan biosynthesis; glycogen biosynthesis. Synthesizes alpha-1,4-glucan chains using ADP-glucose. The chain is Glycogen synthase from Myxococcus xanthus (strain DK1622).